The following is a 208-amino-acid chain: FMN-dependent NADH:quinone oxidoreductase (208 aa).

Residues serine 9, 15-17, 96-99, and 140-143 contribute to the FMN site; these read SVS, MYNF, and TRGG.

The protein belongs to the azoreductase type 1 family. As to quaternary structure, homodimer. FMN is required as a cofactor.

The catalysed reaction is 2 a quinone + NADH + H(+) = 2 a 1,4-benzosemiquinone + NAD(+). It catalyses the reaction N,N-dimethyl-1,4-phenylenediamine + anthranilate + 2 NAD(+) = 2-(4-dimethylaminophenyl)diazenylbenzoate + 2 NADH + 2 H(+). Quinone reductase that provides resistance to thiol-specific stress caused by electrophilic quinones. Functionally, also exhibits azoreductase activity. Catalyzes the reductive cleavage of the azo bond in aromatic azo compounds to the corresponding amines. The protein is FMN-dependent NADH:quinone oxidoreductase of Azospirillum brasilense.